Reading from the N-terminus, the 477-residue chain is Glycogen synthase (477 aa).

Lys-15 provides a ligand contact to ADP-alpha-D-glucose.

The protein belongs to the glycosyltransferase 1 family. Bacterial/plant glycogen synthase subfamily.

The enzyme catalyses [(1-&gt;4)-alpha-D-glucosyl](n) + ADP-alpha-D-glucose = [(1-&gt;4)-alpha-D-glucosyl](n+1) + ADP + H(+). It functions in the pathway glycan biosynthesis; glycogen biosynthesis. Functionally, synthesizes alpha-1,4-glucan chains using ADP-glucose. In Citrobacter koseri (strain ATCC BAA-895 / CDC 4225-83 / SGSC4696), this protein is Glycogen synthase.